The primary structure comprises 264 residues: Small ribosomal subunit protein eS1 (264 aa).

Basic and acidic residues predominate over residues 236-255 (GEGGSGKRGEAGDKSERPEG). The interval 236–264 (GEGGSGKRGEAGDKSERPEGYEPPVQESV) is disordered.

It belongs to the eukaryotic ribosomal protein eS1 family. In terms of assembly, component of the small ribosomal subunit. Mature ribosomes consist of a small (40S) and a large (60S) subunit. The 40S subunit contains about 33 different proteins and 1 molecule of RNA (18S). The 60S subunit contains about 49 different proteins and 3 molecules of RNA (28S, 5.8S and 5S).

It is found in the cytoplasm. The chain is Small ribosomal subunit protein eS1 from Spodoptera frugiperda (Fall armyworm).